The chain runs to 46 residues: KSCCPNTTGRNIYNTCRFGGGSREVCASLSGCKIISASTCPSYPDK.

Intrachain disulfides connect Cys3/Cys40, Cys4/Cys32, and Cys16/Cys26.

This sequence belongs to the plant thionin (TC 1.C.44) family.

It is found in the secreted. Its function is as follows. Thionins are small plant proteins which are toxic to animal cells. They seem to exert their toxic effect at the level of the cell membrane. Their precise function is not known. The sequence is that of Viscotoxin-A2 (THI2.3) from Viscum album (European mistletoe).